The chain runs to 318 residues: Putative enoyl-CoA hydratase EchA13 (318 aa).

Residues 90-110 (LGSADDIRERSPGPDQHPSYR) form a disordered region.

The protein belongs to the enoyl-CoA hydratase/isomerase family.

This is Putative enoyl-CoA hydratase EchA13 (echA13) from Mycobacterium tuberculosis (strain ATCC 25618 / H37Rv).